The chain runs to 1100 residues: DNA repair protein RAD1 (1100 aa).

Positions 1-47 (MSQLFYQGDSDDELQEELTRQTTQASQSSKIKNEDEPDDSNHLNEVE) are disordered. Residues 20–30 (RQTTQASQSSK) are compositionally biased toward polar residues. A compositionally biased stretch (basic and acidic residues) spans 31-47 (IKNEDEPDDSNHLNEVE). The residue at position 613 (Ser613) is a Phosphoserine. The 81-residue stretch at 821–901 (VVIVDTREFN…YPTLLIEFDE (81 aa)) folds into the ERCC4 domain. The tract at residues 1063–1100 (EKEEQEQESTDENLESPGKTTDDNALHDHHNDVPEAPV) is disordered. Acidic residues predominate over residues 1065 to 1076 (EEQEQESTDENL). Residue Ser1071 is modified to Phosphoserine. Position 1072 is a phosphothreonine (Thr1072). Over residues 1082–1100 (TTDDNALHDHHNDVPEAPV) the composition is skewed to basic and acidic residues.

It belongs to the XPF family. Component of the nucleotide excision repair factor 1 (NEF1) complex consisting of RAD1, RAD10 and RAD14. Interacts with SAW1.

Its subcellular location is the nucleus. In terms of biological role, involved in nucleotide excision repair of DNA damaged with UV light, bulky adducts, or cross-linking agents. Along with RAD10 forms an endonuclease that specifically degrades single-stranded DNA. The sequence is that of DNA repair protein RAD1 (RAD1) from Saccharomyces cerevisiae (strain ATCC 204508 / S288c) (Baker's yeast).